We begin with the raw amino-acid sequence, 122 residues long: Large ribosomal subunit protein bL12 (122 aa).

The protein belongs to the bacterial ribosomal protein bL12 family. Homodimer. Part of the ribosomal stalk of the 50S ribosomal subunit. Forms a multimeric L10(L12)X complex, where L10 forms an elongated spine to which 2 to 4 L12 dimers bind in a sequential fashion. Binds GTP-bound translation factors.

Functionally, forms part of the ribosomal stalk which helps the ribosome interact with GTP-bound translation factors. Is thus essential for accurate translation. This chain is Large ribosomal subunit protein bL12, found in Shewanella denitrificans (strain OS217 / ATCC BAA-1090 / DSM 15013).